The following is a 291-amino-acid chain: UDP-N-acetylenolpyruvoylglucosamine reductase (291 aa).

The 168-residue stretch at 19-186 folds into the FAD-binding PCMH-type domain; the sequence is GIGGPAEWIA…VSARLKLASG (168 aa). Arg165 is an active-site residue. The Proton donor role is filled by Ser215. The active site involves Glu285.

It belongs to the MurB family. FAD serves as cofactor.

The protein resides in the cytoplasm. The catalysed reaction is UDP-N-acetyl-alpha-D-muramate + NADP(+) = UDP-N-acetyl-3-O-(1-carboxyvinyl)-alpha-D-glucosamine + NADPH + H(+). It participates in cell wall biogenesis; peptidoglycan biosynthesis. Functionally, cell wall formation. The sequence is that of UDP-N-acetylenolpyruvoylglucosamine reductase from Prochlorococcus marinus (strain NATL2A).